Here is a 158-residue protein sequence, read N- to C-terminus: Transcriptional repressor NrdR (158 aa).

A disordered region spans residues 1–22 (MRCPFCGSDDTQVKDSRPAEDN). A zinc finger spans residues 3–34 (CPFCGSDDTQVKDSRPAEDNSAIRRRRICPDC). The span at 11–22 (TQVKDSRPAEDN) shows a compositional bias: basic and acidic residues. One can recognise an ATP-cone domain in the interval 49 to 139 (LTVLKKTGRK…VYRDFSHAED (91 aa)).

Belongs to the NrdR family. Zn(2+) is required as a cofactor.

Its function is as follows. Negatively regulates transcription of bacterial ribonucleotide reductase nrd genes and operons by binding to NrdR-boxes. This Allorhizobium ampelinum (strain ATCC BAA-846 / DSM 112012 / S4) (Agrobacterium vitis (strain S4)) protein is Transcriptional repressor NrdR.